The chain runs to 383 residues: N-acetyldiaminopimelate deacetylase (383 aa).

Residue D72 is part of the active site. The Proton acceptor role is filled by E131.

This sequence belongs to the peptidase M20A family. N-acetyldiaminopimelate deacetylase subfamily.

It catalyses the reaction N-acetyl-(2S,6S)-2,6-diaminopimelate + H2O = (2S,6S)-2,6-diaminopimelate + acetate. It functions in the pathway amino-acid biosynthesis; L-lysine biosynthesis via DAP pathway; LL-2,6-diaminopimelate from (S)-tetrahydrodipicolinate (acetylase route): step 3/3. Catalyzes the conversion of N-acetyl-diaminopimelate to diaminopimelate and acetate. In Lacticaseibacillus casei (strain BL23) (Lactobacillus casei), this protein is N-acetyldiaminopimelate deacetylase.